The chain runs to 451 residues: uncharacterized protein (451 aa).

The TRAM domain occupies 2 to 60 (NVVLKQRIPLKIKRMGINGEGIGFYKKTLIFVPGALKGEEVFCQISSVRRNFAEAKLLK). The [4Fe-4S] cluster site is built by cysteine 73, cysteine 79, cysteine 82, and cysteine 162. S-adenosyl-L-methionine contacts are provided by glutamine 283, tyrosine 312, aspartate 333, and aspartate 381. The Nucleophile role is filled by cysteine 408.

Belongs to the class I-like SAM-binding methyltransferase superfamily. RNA M5U methyltransferase family.

This is an uncharacterized protein from Streptococcus agalactiae serotype III (strain NEM316).